Here is a 315-residue protein sequence, read N- to C-terminus: DNA-directed RNA polymerase subunit alpha (315 aa).

Positions 1 to 228 (MIEIEKPKVD…EHLNLFIDLT (228 aa)) are alpha N-terminal domain (alpha-NTD). The interval 245-315 (KEKVLEMTIE…LGLGLKPSEE (71 aa)) is alpha C-terminal domain (alpha-CTD).

This sequence belongs to the RNA polymerase alpha chain family. As to quaternary structure, homodimer. The RNAP catalytic core consists of 2 alpha, 1 beta, 1 beta' and 1 omega subunit. When a sigma factor is associated with the core the holoenzyme is formed, which can initiate transcription.

It catalyses the reaction RNA(n) + a ribonucleoside 5'-triphosphate = RNA(n+1) + diphosphate. Its function is as follows. DNA-dependent RNA polymerase catalyzes the transcription of DNA into RNA using the four ribonucleoside triphosphates as substrates. The sequence is that of DNA-directed RNA polymerase subunit alpha from Clostridioides difficile (strain 630) (Peptoclostridium difficile).